The following is a 241-amino-acid chain: Probable histone-lysine N-methyltransferase set-23 (241 aa).

Residues 25-85 form the Pre-SET domain; the sequence is QGCDCETQCS…SCRNKVVQNG (61 aa). C27, C29, C33, C39, C41, C64, C68, C70, and C77 together coordinate Zn(2+). The region spanning 88-210 is the SET domain; it reads KKLKIFSTSE…VGEELSYDYG (123 aa). S-adenosyl-L-methionine contacts are provided by residues 98-100, D138, Y140, R167, and 170-171; these read KGD and NH. Residues C173, C222, C224, and C229 each contribute to the Zn(2+) site. In terms of domain architecture, Post-SET spans 218–234; sequence NRKLCLCRSENCRKYLP.

This sequence belongs to the class V-like SAM-binding methyltransferase superfamily. Histone-lysine methyltransferase family. Suvar3-9 subfamily.

The protein resides in the nucleus. It localises to the chromosome. It catalyses the reaction L-lysyl-[histone] + S-adenosyl-L-methionine = N(6)-methyl-L-lysyl-[histone] + S-adenosyl-L-homocysteine + H(+). Functionally, probable histone methyltransferase required for embryonic development. This chain is Probable histone-lysine N-methyltransferase set-23, found in Caenorhabditis briggsae.